The following is a 245-amino-acid chain: NAD-dependent protein deacylase 1 (245 aa).

The region spanning 1–243 (MDEKLLKTIA…DELVRHVRKA (243 aa)) is the Deacetylase sirtuin-type domain. 20 to 39 (GAGVSAESGIPTFRGKDGLW) contributes to the NAD(+) binding site. Substrate-binding residues include Tyr64 and Arg67. 98–101 (QNVD) serves as a coordination point for NAD(+). The active-site Proton acceptor is His116. Positions 124, 127, 145, and 148 each coordinate Zn(2+). NAD(+)-binding positions include 185-187 (GTS), 211-213 (NPD), and Ala229.

It belongs to the sirtuin family. Class III subfamily. It depends on Zn(2+) as a cofactor.

It is found in the cytoplasm. It carries out the reaction N(6)-acetyl-L-lysyl-[protein] + NAD(+) + H2O = 2''-O-acetyl-ADP-D-ribose + nicotinamide + L-lysyl-[protein]. The catalysed reaction is N(6)-succinyl-L-lysyl-[protein] + NAD(+) + H2O = 2''-O-succinyl-ADP-D-ribose + nicotinamide + L-lysyl-[protein]. In terms of biological role, NAD-dependent lysine deacetylase and desuccinylase that specifically removes acetyl and succinyl groups on target proteins. Modulates the activities of several proteins which are inactive in their acylated form. Deacetylates the N-terminal lysine residue of Alba, the major archaeal chromatin protein and that, in turn, increases Alba's DNA binding affinity, thereby repressing transcription. This is NAD-dependent protein deacylase 1 from Archaeoglobus fulgidus (strain ATCC 49558 / DSM 4304 / JCM 9628 / NBRC 100126 / VC-16).